The sequence spans 129 residues: Small ribosomal subunit protein eS6 (129 aa).

Residues 53–88 (TGGSDTSGRPMRPDVRGVTTKEIMSDGGVGFEPTTD) are disordered.

The protein belongs to the eukaryotic ribosomal protein eS6 family.

The sequence is that of Small ribosomal subunit protein eS6 (rps6e) from Haloarcula marismortui (strain ATCC 43049 / DSM 3752 / JCM 8966 / VKM B-1809) (Halobacterium marismortui).